The primary structure comprises 520 residues: MRVRKRQSRRTSTKLKEGIKKKASAHRKKEKKMAKKDVTWRSRSKKDPGIPSNFPYKAKILEEIEAKKMKDLEERELAKQQRLEARKAAKEQGVDAMDEDMIEDDENGLAALVESAQQAAAEYEGTPSNDADVRDDELDVIDYNIDFYGEDVEGESELEKSRKAYDKIFKSVIDASDVILYVLDARDPESTRSRKVEEAVLQSQGKRLILILNKVDLIPPHVLEQWLNYLKSSFPTIPLRASSGAVNGTSFNRKLSQTTTASALLESLKTYSNNSNLKRSIVVGVIGYPNVGKSSVINALLARRGGQSKACPVGNEAGVTTSLREIKIDNKLKILDSPGICFPSENKKRSKVEHEAELALLNALPAKHIVDPYPAVLMLVKRLAKSDEMTESFKKLYEIPPIPANDADTFTKHFLIHVARKRGRLGKGGIPNLASAGLSVLNDWRDGKILGWVLPNTSAAASQQDKQNLSTINTGTKQAPIAANESTIVSEWSKEFDLDGLFSSLDKAIDASKDQDTMME.

Basic residues-rich tracts occupy residues methionine 1–threonine 13 and lysine 21–alanine 34. A disordered region spans residues methionine 1 to asparagine 53. The span at lysine 35–proline 48 shows a compositional bias: basic and acidic residues. One can recognise a CP-type G domain in the interval tyrosine 165–proline 343. GTP is bound by residues asparagine 213–aspartate 216, glycine 287–serine 294, and aspartate 336–glycine 339. Serine 337 bears the Phosphoserine mark.

It belongs to the TRAFAC class YlqF/YawG GTPase family.

The protein resides in the nucleus. GTPase required for 60S ribosomal subunit export to the cytoplasm. The chain is Nuclear GTP-binding protein NUG1 (NUG1) from Saccharomyces cerevisiae (strain ATCC 204508 / S288c) (Baker's yeast).